A 191-amino-acid chain; its full sequence is Small ribosomal subunit protein uS7 (191 aa).

Residues 56–80 form a disordered region; the sequence is NKSGEQGDGDGESGGKAGGIKKRSL.

This sequence belongs to the universal ribosomal protein uS7 family. Part of the 30S ribosomal subunit. Contacts proteins S9 and S11.

One of the primary rRNA binding proteins, it binds directly to 16S rRNA where it nucleates assembly of the head domain of the 30S subunit. Is located at the subunit interface close to the decoding center, probably blocks exit of the E-site tRNA. In Coxiella burnetii (strain RSA 493 / Nine Mile phase I), this protein is Small ribosomal subunit protein uS7.